A 90-amino-acid chain; its full sequence is Small ribosomal subunit protein mS37 (90 aa).

An intrachain disulfide couples Cys27 to Cys58.

It belongs to the mitochondrion-specific ribosomal protein mS37 family. Component of the mitochondrial small ribosomal subunit (mt-SSU). Mature N.crassa 74S mitochondrial ribosomes consist of a small (37S) and a large (54S) subunit. The 37S small subunit contains a 16S ribosomal RNA (16S mt-rRNA) and 32 different proteins. The 54S large subunit contains a 23S rRNA (23S mt-rRNA) and 42 different proteins.

It localises to the mitochondrion. In terms of biological role, component of the mitochondrial ribosome (mitoribosome), a dedicated translation machinery responsible for the synthesis of mitochondrial genome-encoded proteins, including at least some of the essential transmembrane subunits of the mitochondrial respiratory chain. The mitoribosomes are attached to the mitochondrial inner membrane and translation products are cotranslationally integrated into the membrane. The polypeptide is Small ribosomal subunit protein mS37 (mrp10) (Neurospora crassa (strain ATCC 24698 / 74-OR23-1A / CBS 708.71 / DSM 1257 / FGSC 987)).